We begin with the raw amino-acid sequence, 336 residues long: Inositol 2-dehydrogenase (336 aa).

Belongs to the Gfo/Idh/MocA family. As to quaternary structure, homotetramer.

It carries out the reaction myo-inositol + NAD(+) = scyllo-inosose + NADH + H(+). In terms of biological role, involved in the oxidation of myo-inositol (MI) to 2-keto-myo-inositol (2KMI or 2-inosose). The polypeptide is Inositol 2-dehydrogenase (Pseudomonas savastanoi pv. phaseolicola (strain 1448A / Race 6) (Pseudomonas syringae pv. phaseolicola (strain 1448A / Race 6))).